A 265-amino-acid chain; its full sequence is 4-hydroxy-tetrahydrodipicolinate reductase (265 aa).

NAD(+)-binding positions include 7 to 12 (GASGRM) and aspartate 33. Arginine 34 contacts NADP(+). NAD(+)-binding positions include 96–98 (GTT) and 120–123 (AANM). Histidine 153 acts as the Proton donor/acceptor in catalysis. Histidine 154 lines the (S)-2,3,4,5-tetrahydrodipicolinate pocket. Lysine 157 functions as the Proton donor in the catalytic mechanism. 163–164 (GT) lines the (S)-2,3,4,5-tetrahydrodipicolinate pocket.

Belongs to the DapB family.

Its subcellular location is the cytoplasm. It carries out the reaction (S)-2,3,4,5-tetrahydrodipicolinate + NAD(+) + H2O = (2S,4S)-4-hydroxy-2,3,4,5-tetrahydrodipicolinate + NADH + H(+). The catalysed reaction is (S)-2,3,4,5-tetrahydrodipicolinate + NADP(+) + H2O = (2S,4S)-4-hydroxy-2,3,4,5-tetrahydrodipicolinate + NADPH + H(+). It functions in the pathway amino-acid biosynthesis; L-lysine biosynthesis via DAP pathway; (S)-tetrahydrodipicolinate from L-aspartate: step 4/4. Functionally, catalyzes the conversion of 4-hydroxy-tetrahydrodipicolinate (HTPA) to tetrahydrodipicolinate. In Burkholderia lata (strain ATCC 17760 / DSM 23089 / LMG 22485 / NCIMB 9086 / R18194 / 383), this protein is 4-hydroxy-tetrahydrodipicolinate reductase.